We begin with the raw amino-acid sequence, 398 residues long: Abhydrolase domain-containing protein 2 (398 aa).

Over 1–4 (MSTA) the chain is Cytoplasmic. Residues 5-22 (FLTLIAVIVCILFRILNV) form a helical; Signal-anchor for type II membrane protein membrane-spanning segment. Residues 23–398 (HSQPLKPSVW…MMHEVGKVAP (376 aa)) are Extracellular-facing. The 253-residue stretch at 113 to 365 (VAICPGIANS…HGGHLGFYEG (253 aa)) folds into the AB hydrolase-1 domain. Active-site charge relay system residues include serine 192, aspartate 328, and histidine 359.

This sequence belongs to the AB hydrolase superfamily. AB hydrolase 4 family.

The protein localises to the membrane. The chain is Abhydrolase domain-containing protein 2 (Hydr2) from Drosophila melanogaster (Fruit fly).